The chain runs to 1085 residues: DNA-directed RNA polymerase subunit beta (1085 aa).

This sequence belongs to the RNA polymerase beta chain family. In terms of assembly, in plastids the minimal PEP RNA polymerase catalytic core is composed of four subunits: alpha, beta, beta', and beta''. When a (nuclear-encoded) sigma factor is associated with the core the holoenzyme is formed, which can initiate transcription.

The protein resides in the plastid. The protein localises to the chloroplast. The catalysed reaction is RNA(n) + a ribonucleoside 5'-triphosphate = RNA(n+1) + diphosphate. Functionally, DNA-dependent RNA polymerase catalyzes the transcription of DNA into RNA using the four ribonucleoside triphosphates as substrates. The polypeptide is DNA-directed RNA polymerase subunit beta (Physcomitrium patens (Spreading-leaved earth moss)).